A 325-amino-acid polypeptide reads, in one-letter code: DNA-directed RNA polymerase subunit alpha (325 aa).

An alpha N-terminal domain (alpha-NTD) region spans residues 1 to 231 (MQTSLLKPKI…DQLSVFAALE (231 aa)). Residues 246-325 (IDPILLRPVD…ENWPPAGLDK (80 aa)) are alpha C-terminal domain (alpha-CTD).

The protein belongs to the RNA polymerase alpha chain family. Homodimer. The RNAP catalytic core consists of 2 alpha, 1 beta, 1 beta' and 1 omega subunit. When a sigma factor is associated with the core the holoenzyme is formed, which can initiate transcription.

It carries out the reaction RNA(n) + a ribonucleoside 5'-triphosphate = RNA(n+1) + diphosphate. Its function is as follows. DNA-dependent RNA polymerase catalyzes the transcription of DNA into RNA using the four ribonucleoside triphosphates as substrates. This Paraburkholderia phymatum (strain DSM 17167 / CIP 108236 / LMG 21445 / STM815) (Burkholderia phymatum) protein is DNA-directed RNA polymerase subunit alpha.